A 614-amino-acid polypeptide reads, in one-letter code: Deoxynucleoside triphosphate triphosphohydrolase SAMHD1 (614 aa).

Over residues 1–13 the composition is skewed to low complexity; that stretch reads MGSPAAGWGAAPA. Residues 1 to 33 form a disordered region; the sequence is MGSPAAGWGAAPAKRARREGSAESSCGSPADRD. Positions 37-102 constitute an SAM domain; sequence WDTERLCQHL…LACLNQLRQT (66 aa). The GTP site is built by Lys-107 and Val-108. DGTP is bound at residue Asn-110. 3 residues coordinate GTP: Asp-128, Gln-133, and Arg-136. Residues Gln-140, Leu-141, Val-147, and Arg-155 each coordinate dGTP. Gln-140 contributes to the dATP binding site. Position 140 (Gln-140) interacts with dCTP. Position 140 (Gln-140) interacts with dTTP. Arg-155 lines the dATP pocket. Position 155 (Arg-155) interacts with dCTP. Arg-155 contacts dTTP. The region spanning 155–307 is the HD domain; it reads RFEHSLGVGY…GIDVDKWDYF (153 aa). Residues His-158, His-197, and Asp-198 each coordinate Mn(2+). DATP contacts are provided by His-201 and His-206. Residues His-201 and His-206 each contribute to the dCTP site. Positions 201 and 206 each coordinate dTTP. His-224 is a catalytic residue. Asp-302 serves as a coordination point for Mn(2+). DGTP is bound by residues Lys-303, Tyr-306, Asp-310, Arg-324, Arg-343, Lys-345, Asn-349, Arg-357, Tyr-365, Gln-366, His-367, and Lys-368. Positions 303, 306, and 310 each coordinate dATP. Lys-303, Tyr-306, and Asp-310 together coordinate dCTP. Lys-303, Tyr-306, and Asp-310 together coordinate dTTP. DATP is bound at residue Arg-357. DCTP is bound at residue Arg-357. Residue Gln-366 coordinates dATP. Residue Gln-366 participates in dCTP binding. DTTP is bound at residue Gln-366. The GTP site is built by Arg-442, Lys-446, and Lys-515. Lys-515 is a dGTP binding site.

The protein belongs to the SAMHD1 family. Homodimer; in absence of GTP and dNTP. Homotetramer; in GTP- and dNTP-bound form. Interacts with rbbp8/CtIP. Requires Zn(2+) as cofactor.

Its subcellular location is the nucleus. It is found in the chromosome. The enzyme catalyses a 2'-deoxyribonucleoside 5'-triphosphate + H2O = a 2'-deoxyribonucleoside + triphosphate + H(+). The catalysed reaction is dATP + H2O = 2'-deoxyadenosine + triphosphate + H(+). It carries out the reaction dCTP + H2O = 2'-deoxycytidine + triphosphate + H(+). It catalyses the reaction dGTP + H2O = 2'-deoxyguanosine + triphosphate + H(+). The enzyme catalyses dTTP + H2O = thymidine + triphosphate + H(+). With respect to regulation, allosterically activated and regulated via the combined actions of GTP and dNTPs (dATP, dGTP, dTTP and dCTP): Allosteric site 1 binds GTP, while allosteric site 2 binds dNTP. Allosteric activation promotes the formation of highly active homotetramers. In terms of biological role, protein that acts both as a host restriction factor involved in defense response to virus and as a regulator of DNA end resection at stalled replication forks. Has deoxynucleoside triphosphate (dNTPase) activity, which is required to restrict infection by viruses: dNTPase activity reduces cellular dNTP levels to levels too low for retroviral reverse transcription to occur, blocking early-stage virus replication in dendritic and other myeloid cells. Functions during S phase at stalled DNA replication forks to promote the resection of gapped or reversed forks: acts by stimulating the exonuclease activity of MRE11, activating the ATR-CHK1 pathway and allowing the forks to restart replication. Its ability to promote degradation of nascent DNA at stalled replication forks is required to prevent induction of type I interferons, thereby preventing chronic inflammation. Ability to promote DNA end resection at stalled replication forks is independent of dNTPase activity. This chain is Deoxynucleoside triphosphate triphosphohydrolase SAMHD1, found in Gallus gallus (Chicken).